Reading from the N-terminus, the 372-residue chain is UDP-N-acetylglucosamine--N-acetylmuramyl-(pentapeptide) pyrophosphoryl-undecaprenol N-acetylglucosamine transferase (372 aa).

Residues 11-13, Asn123, Arg160, Ser200, and Gln298 contribute to the UDP-N-acetyl-alpha-D-glucosamine site; that span reads TAG.

This sequence belongs to the glycosyltransferase 28 family. MurG subfamily.

It localises to the cell membrane. The enzyme catalyses di-trans,octa-cis-undecaprenyl diphospho-N-acetyl-alpha-D-muramoyl-L-alanyl-D-glutamyl-meso-2,6-diaminopimeloyl-D-alanyl-D-alanine + UDP-N-acetyl-alpha-D-glucosamine = di-trans,octa-cis-undecaprenyl diphospho-[N-acetyl-alpha-D-glucosaminyl-(1-&gt;4)]-N-acetyl-alpha-D-muramoyl-L-alanyl-D-glutamyl-meso-2,6-diaminopimeloyl-D-alanyl-D-alanine + UDP + H(+). The protein operates within cell wall biogenesis; peptidoglycan biosynthesis. Its function is as follows. Cell wall formation. Catalyzes the transfer of a GlcNAc subunit on undecaprenyl-pyrophosphoryl-MurNAc-pentapeptide (lipid intermediate I) to form undecaprenyl-pyrophosphoryl-MurNAc-(pentapeptide)GlcNAc (lipid intermediate II). This is UDP-N-acetylglucosamine--N-acetylmuramyl-(pentapeptide) pyrophosphoryl-undecaprenol N-acetylglucosamine transferase from Cutibacterium acnes (strain DSM 16379 / KPA171202) (Propionibacterium acnes).